We begin with the raw amino-acid sequence, 190 residues long: dTTP/UTP pyrophosphatase (190 aa).

D71 serves as the catalytic Proton acceptor.

Belongs to the Maf family. YhdE subfamily. Requires a divalent metal cation as cofactor.

Its subcellular location is the cytoplasm. The enzyme catalyses dTTP + H2O = dTMP + diphosphate + H(+). It carries out the reaction UTP + H2O = UMP + diphosphate + H(+). Nucleoside triphosphate pyrophosphatase that hydrolyzes dTTP and UTP. May have a dual role in cell division arrest and in preventing the incorporation of modified nucleotides into cellular nucleic acids. The protein is dTTP/UTP pyrophosphatase of Xanthomonas axonopodis pv. citri (strain 306).